Consider the following 4644-residue polypeptide: Cytoplasmic dynein 1 heavy chain 1 (4644 aa).

Ser2 bears the N-acetylserine mark. Residues 2 to 1865 (SETGGGEDGS…SIQMANAKFN (1864 aa)) are stem. Coiled-coil stretches lie at residues 48 to 69 (AALEAALEEKSALEQMRKFLSD), 179 to 200 (SVEKKIAELEMGLLHLQQNIEI), 453 to 476 (AHRKLQARLDQMRKFRRQHEQLRA), and 541 to 564 (TEAWEAAMKRYDERIDRVETRITA). Ser68 is subject to Phosphoserine. The segment at 446–701 (MVWRINPAHR…NTQEIFDDWA (256 aa)) is interaction with DYNC1I2. Residues 649–800 (AKQIDRQLTA…EKVEERNTIS (152 aa)) are interaction with DYNC1LI2. Position 1123 is an N6-acetyllysine (Lys1123). Residues 1169 to 1201 (TYVQSLKRKIKQFEKQVELYRNGQRLLEKQRFQ) are a coiled coil. Ser1228 is modified (phosphoserine). Coiled coils occupy residues 1229–1250 (AIQQQVANLQMKIVQEDRAVES) and 1355–1371 (RKLRQNLDGLLNQLKNF). 4 AAA regions span residues 1866 to 2097 (YGFE…VLVS), 2178 to 2450 (EELK…LTRL), 2554 to 2803 (EVET…WVRG), and 2897 to 3166 (VFYE…GGRT). ATP-binding positions include 1904–1911 (GPAGTGKT) and 2222–2229 (GPSGSGKS). Positions 2389-2409 (EDEAQRRRKGKEDEGEEAASP) are disordered. ATP is bound by residues 2593–2600 (GPPGSGKT) and 2935–2942 (GVSGAGKT). Coiled-coil stretches lie at residues 3187–3273 (EKRS…ADKQ), 3394–3498 (AIAQ…KNQM), and 3735–3798 (EFQL…VSQQ). Residues 3187 to 3498 (EKRSELEEQQ…KTSETFKNQM (312 aa)) are stalk. The residue at position 3478 (Lys3478) is an N6-acetyllysine. AAA regions lie at residues 3551–3780 (LSNA…EVTR) and 4003–4219 (AHMF…TVDT). The residue at position 4160 (Ser4160) is a Phosphoserine. An N6-acetyllysine modification is found at Lys4281. Thr4364 is subject to Phosphothreonine.

It belongs to the dynein heavy chain family. Homodimer. The cytoplasmic dynein 1 complex consists of two catalytic heavy chains (HCs) and a number of non-catalytic subunits presented by intermediate chains (ICs), light intermediate chains (LICs) and light chains (LCs); the composition seems to vary in respect to the IC, LIC and LC composition. The heavy chain homodimer serves as a scaffold for the probable homodimeric assembly of the respective non-catalytic subunits. The ICs and LICs bind directly to the HC dimer and dynein LCs assemble on the IC dimer. Interacts with DYNC1LI1; DYNC1LI1 and DYNC1LI2 bind mutually exclusive to DYNC1H1. Interacts with DYNC1LI2; DYNC1LI1 and DYNC1LI2 bind mutually exclusive to DYNC1H1. Interacts with DYNC1I2. Interacts with BICD2. Interacts with DNALI1.

It is found in the cytoplasm. Its subcellular location is the cytoskeleton. In terms of biological role, cytoplasmic dynein 1 acts as a motor for the intracellular retrograde motility of vesicles and organelles along microtubules. Dynein has ATPase activity; the force-producing power stroke is thought to occur on release of ADP. Plays a role in mitotic spindle assembly and metaphase plate congression. This is Cytoplasmic dynein 1 heavy chain 1 (Dync1h1) from Rattus norvegicus (Rat).